A 339-amino-acid chain; its full sequence is DNA-directed RNA polymerase subunit alpha (339 aa).

The alpha N-terminal domain (alpha-NTD) stretch occupies residues Met1–Glu233. Residues Lys264–Phe339 form an alpha C-terminal domain (alpha-CTD) region.

The protein belongs to the RNA polymerase alpha chain family. As to quaternary structure, in plastids the minimal PEP RNA polymerase catalytic core is composed of four subunits: alpha, beta, beta', and beta''. When a (nuclear-encoded) sigma factor is associated with the core the holoenzyme is formed, which can initiate transcription.

It localises to the plastid. It is found in the chloroplast. It carries out the reaction RNA(n) + a ribonucleoside 5'-triphosphate = RNA(n+1) + diphosphate. DNA-dependent RNA polymerase catalyzes the transcription of DNA into RNA using the four ribonucleoside triphosphates as substrates. This chain is DNA-directed RNA polymerase subunit alpha, found in Thinopyrum bessarabicum (Wheatgrass).